A 258-amino-acid chain; its full sequence is Cytochrome c oxidase subunit 2 (258 aa).

Over 1 to 41 the chain is Mitochondrial intermembrane; that stretch reads MIVNECLFFTIALCDAAEPWQLGFQDAATPMMQGIIDLHHD. The helical transmembrane segment at 42–58 threads the bilayer; the sequence is ILFFLILILVFVLWILV. Topologically, residues 59–82 are mitochondrial matrix; sequence RALWHFYYKKNPIPQRIVHGTTIE. The helical transmembrane segment at 83 to 104 threads the bilayer; it reads ILWTIFPSIILMFIAIPSFALL. The Mitochondrial intermembrane segment spans residues 105–258; sequence YSMDEVVVDP…VSNLFIPPTS (154 aa). Positions 187, 222, 224, 226, 230, and 233 each coordinate Cu cation. Residue Glu224 participates in Mg(2+) binding.

Belongs to the cytochrome c oxidase subunit 2 family. In terms of assembly, component of the cytochrome c oxidase (complex IV, CIV), a multisubunit enzyme composed of a catalytic core of 3 subunits and several supernumerary subunits. The complex exists as a monomer or a dimer and forms supercomplexes (SCs) in the inner mitochondrial membrane with ubiquinol-cytochrome c oxidoreductase (cytochrome b-c1 complex, complex III, CIII). Cu cation is required as a cofactor.

It is found in the mitochondrion inner membrane. It carries out the reaction 4 Fe(II)-[cytochrome c] + O2 + 8 H(+)(in) = 4 Fe(III)-[cytochrome c] + 2 H2O + 4 H(+)(out). Functionally, component of the cytochrome c oxidase, the last enzyme in the mitochondrial electron transport chain which drives oxidative phosphorylation. The respiratory chain contains 3 multisubunit complexes succinate dehydrogenase (complex II, CII), ubiquinol-cytochrome c oxidoreductase (cytochrome b-c1 complex, complex III, CIII) and cytochrome c oxidase (complex IV, CIV), that cooperate to transfer electrons derived from NADH and succinate to molecular oxygen, creating an electrochemical gradient over the inner membrane that drives transmembrane transport and the ATP synthase. Cytochrome c oxidase is the component of the respiratory chain that catalyzes the reduction of oxygen to water. Electrons originating from reduced cytochrome c in the intermembrane space (IMS) are transferred via the dinuclear copper A center (CU(A)) of subunit 2 and heme A of subunit 1 to the active site in subunit 1, a binuclear center (BNC) formed by heme A3 and copper B (CU(B)). The BNC reduces molecular oxygen to 2 water molecules using 4 electrons from cytochrome c in the IMS and 4 protons from the mitochondrial matrix. The polypeptide is Cytochrome c oxidase subunit 2 (COX2) (Oenothera berteroana (Bertero's evening primrose)).